The primary structure comprises 339 residues: Phenylalanine--tRNA ligase alpha subunit (339 aa).

Glu-254 contributes to the Mg(2+) binding site.

It belongs to the class-II aminoacyl-tRNA synthetase family. Phe-tRNA synthetase alpha subunit type 1 subfamily. In terms of assembly, tetramer of two alpha and two beta subunits. Mg(2+) is required as a cofactor.

It is found in the cytoplasm. It carries out the reaction tRNA(Phe) + L-phenylalanine + ATP = L-phenylalanyl-tRNA(Phe) + AMP + diphosphate + H(+). The sequence is that of Phenylalanine--tRNA ligase alpha subunit from Clostridium botulinum (strain Langeland / NCTC 10281 / Type F).